Consider the following 805-residue polypeptide: U-box domain-containing protein 32 (805 aa).

2 disordered regions span residues 181 to 205 and 226 to 284; these read SNNR…SEKL and EKDT…EREG. Over residues 226–239 the composition is skewed to basic and acidic residues; sequence EKDTGQLEREKVEP. The span at 245 to 257 shows a compositional bias: low complexity; sequence FSSGSSSSFGEPV. A coiled-coil region spans residues 331–434; sequence LEGLCIKESS…EVNALRRLVK (104 aa). Residues 460-718 enclose the Protein kinase domain; that stretch reads FDPSWKLGEG…FIDRMKAPEV (259 aa). ATP is bound by residues 466–474 and lysine 487; that span reads LGEGKYGSV. The U-box domain occupies 734–805; it reads RPPSHYLCPI…LAIQDWQNQW (72 aa).

The protein belongs to the protein kinase superfamily. Ser/Thr protein kinase family.

The catalysed reaction is S-ubiquitinyl-[E2 ubiquitin-conjugating enzyme]-L-cysteine + [acceptor protein]-L-lysine = [E2 ubiquitin-conjugating enzyme]-L-cysteine + N(6)-ubiquitinyl-[acceptor protein]-L-lysine.. The protein operates within protein modification; protein ubiquitination. Functions as an E3 ubiquitin ligase. In Arabidopsis thaliana (Mouse-ear cress), this protein is U-box domain-containing protein 32 (PUB32).